The chain runs to 266 residues: Endoplasmic reticulum vesicle protein 25 (266 aa).

The N-terminal stretch at 1–26 (MGSSPQSSTRTLLGLLFLLLVQLSSA) is a signal peptide. The Lumenal segment spans residues 27-188 (LKFDLHASSG…TNESTNERVK (162 aa)). Residues 39–129 (ERCIRNFVFK…YKSVELDVEI (91 aa)) form the GOLD domain. Residues 189-209 (WFAFGTMGMLVGLGVWQVVYL) traverse the membrane as a helical segment. Residues 210–266 (RAYFRYVDFPVSWRVDGVVANCCSCCEQVEASYLRSSRVVFWSPLVMWTRLSWLILR) are Cytoplasmic-facing.

This sequence belongs to the EMP24/GP25L family.

The protein resides in the endoplasmic reticulum membrane. The protein localises to the golgi apparatus membrane. Its function is as follows. Constituent of COPII-coated endoplasmic reticulum-derived transport vesicles. Required for efficient transport of a subset of secretory proteins to the Golgi. Facilitates retrograde transport from the Golgi to the endoplasmic reticulum. The polypeptide is Endoplasmic reticulum vesicle protein 25 (erv25) (Aspergillus fumigatus (strain ATCC MYA-4609 / CBS 101355 / FGSC A1100 / Af293) (Neosartorya fumigata)).